Consider the following 409-residue polypeptide: MHLQRALVVLALLNFATVSLSMSTCTTLDFDHIKRKRVEAIRGQILSKLRLTSPPDPSMLANIPTQVLDLYNSTRELLEEVHGERGDDCTQENTESEYYAKEIYKFDMIQGLEEHNDLAVCPKGITSKIFRFNVSSVEKNETNLFRAEFRVLRMPNPSSKRSEQRIELFQILQPDEHIAKQRYIDGKNLPTRGAAEWLSFDVTDTVREWLLRRESNLGLEISIHCPCHTFQPNGDILENIQEVMEIKFKGVDSEDDPGRGDLGRLKKKKEHSPHLILMMIPPDRLDNPGLGAQRKKRALDTNYCFRNLEENCCVRPLYIDFRQDLGWKWVHEPKGYYANFCSGPCPYLRSADTTHSSVLGLYNTLNPEASASPCCVPQDLEPLTILYYVGRTAKVEQLSNMVVKSCKCS.

The signal sequence occupies residues 1–21 (MHLQRALVVLALLNFATVSLS). 3 N-linked (GlcNAc...) asparagine glycosylation sites follow: Asn72, Asn133, and Asn140. The Cell attachment site motif lies at 259–261 (RGD). 4 disulfide bridges follow: Cys304–Cys313, Cys312–Cys375, Cys341–Cys406, and Cys345–Cys408.

It belongs to the TGF-beta family. Interacts with ASPN. Latency-associated peptide: Homodimer; disulfide-linked. Latency-associated peptide: Interacts with Transforming growth factor beta-3 (TGF-beta-3) chain; interaction is non-covalent and maintains (TGF-beta-3) in a latent state. Latency-associated peptide: Interacts with LRRC32/GARP; leading to regulate activation of TGF-beta-3 and promote epithelial fusion during palate development. Latency-associated peptide: Interacts (via cell attachment site) with integrins, leading to release of the active TGF-beta-3. Transforming growth factor beta-3: Homodimer; disulfide-linked. Transforming growth factor beta-3: Interacts with TGF-beta receptors (TGFBR1 and TGFBR2), leading to signal transduction. Transforming growth factor beta-3 proprotein: The precursor proprotein is cleaved in the Golgi apparatus to form Transforming growth factor beta-3 (TGF-beta-3) and Latency-associated peptide (LAP) chains, which remain non-covalently linked, rendering TGF-beta-3 inactive.

It localises to the secreted. The protein resides in the extracellular space. The protein localises to the extracellular matrix. Transforming growth factor beta-3 proprotein: Precursor of the Latency-associated peptide (LAP) and Transforming growth factor beta-3 (TGF-beta-3) chains, which constitute the regulatory and active subunit of TGF-beta-3, respectively. Functionally, required to maintain the Transforming growth factor beta-3 (TGF-beta-3) chain in a latent state during storage in extracellular matrix. Associates non-covalently with TGF-beta-3 and regulates its activation via interaction with 'milieu molecules', such as LTBP1 and LRRC32/GARP, that control activation of TGF-beta-3. Interaction with integrins results in distortion of the Latency-associated peptide chain and subsequent release of the active TGF-beta-3. Its function is as follows. Transforming growth factor beta-3: Multifunctional protein that regulates embryogenesis and cell differentiation and is required in various processes such as secondary palate development. Activation into mature form follows different steps: following cleavage of the proprotein in the Golgi apparatus, Latency-associated peptide (LAP) and Transforming growth factor beta-3 (TGF-beta-3) chains remain non-covalently linked rendering TGF-beta-3 inactive during storage in extracellular matrix. At the same time, LAP chain interacts with 'milieu molecules', such as LTBP1 and LRRC32/GARP that control activation of TGF-beta-3 and maintain it in a latent state during storage in extracellular milieus. TGF-beta-3 is released from LAP by integrins: integrin-binding results in distortion of the LAP chain and subsequent release of the active TGF-beta-3. Once activated following release of LAP, TGF-beta-3 acts by binding to TGF-beta receptors (TGFBR1 and TGFBR2), which transduce signal. The sequence is that of Transforming growth factor beta-3 proprotein (TGFB3) from Sus scrofa (Pig).